Consider the following 156-residue polypeptide: MNELIGVIRIRGWAATPWYIQDTLSMLRLKNAFNAMIYPKDSSIQGMLNLVSSYVTWGELNDEGLRLLVSKLEISRGKKVNEEYVKDKLNVDFQSFVESIKDGKLRLNKLDEIFSLPIRLHPPKGGFKGKVSRPFRAGGEFGYRGDKINELIRRMV.

The protein belongs to the universal ribosomal protein uL30 family. Part of the 50S ribosomal subunit.

The polypeptide is Large ribosomal subunit protein uL30 (Sulfolobus acidocaldarius (strain ATCC 33909 / DSM 639 / JCM 8929 / NBRC 15157 / NCIMB 11770)).